The primary structure comprises 254 residues: 3-dehydroquinate dehydratase (254 aa).

3-dehydroquinate is bound by residues 47–49 (EFR) and Arg83. Residue His144 is the Proton donor/acceptor of the active site. Catalysis depends on Lys171, which acts as the Schiff-base intermediate with substrate. Residues Arg213, Ser232, and Gln236 each coordinate 3-dehydroquinate.

This sequence belongs to the type-I 3-dehydroquinase family. In terms of assembly, homodimer.

It catalyses the reaction 3-dehydroquinate = 3-dehydroshikimate + H2O. It functions in the pathway metabolic intermediate biosynthesis; chorismate biosynthesis; chorismate from D-erythrose 4-phosphate and phosphoenolpyruvate: step 3/7. Involved in the third step of the chorismate pathway, which leads to the biosynthesis of aromatic amino acids. Catalyzes the cis-dehydration of 3-dehydroquinate (DHQ) and introduces the first double bond of the aromatic ring to yield 3-dehydroshikimate. This Neisseria meningitidis serogroup A / serotype 4A (strain DSM 15465 / Z2491) protein is 3-dehydroquinate dehydratase.